The sequence spans 236 residues: MKQKSWNINLEEMMQAGVHFGHQARKWNPKMASYIFTERKGIHILNLTQTARFLSEACDLLANASSKGKQVLIVGTKYQAADLVASASIKARCHYINQKWLGGMLTNWSTIEKRLQRFKDLENKEKTGVLNQLPKKEAATLKRQLVQLRKYLGGIKYMTSLPDIVIIIDQQKEITAINECITLGIPTICLVDTDCDPDLTDIPIPANDDARASIRWILNKLTLAISEGRYNSIKTE.

The protein belongs to the universal ribosomal protein uS2 family.

The protein resides in the plastid. It is found in the chloroplast. In Physcomitrium patens (Spreading-leaved earth moss), this protein is Small ribosomal subunit protein uS2c (rps2).